We begin with the raw amino-acid sequence, 149 residues long: Oocyte-expressed protein homolog (149 aa).

The disordered stretch occupies residues 1–22 (MVDDAGAAESQRGKQTPAHSLE). In terms of domain architecture, KH; atypical spans 49–110 (PLVFYLEAWL…RVQNRVKSML (62 aa)).

This sequence belongs to the KHDC1 family. In terms of assembly, component of the subcortical maternal complex (SCMC), at least composed of NLRP5, KHDC3L, OOEP, and TLE6 isoform 1. Within the complex, interacts with NLRP5, KHDC3L and TLE6 isoform 1. As part of the SCMC interacts with the SCMC-associated protein NLRP4F. The SCMC may facilitate translocation of its components between the nuclear and cytoplasmic compartments. Forms a scaffold complex with KHDC3L/FILIA, and interacts with BLM and TRIM25 at DNA replication forks.

It is found in the cytoplasm. The protein resides in the nucleus. In terms of biological role, component of the subcortical maternal complex (SCMC), a multiprotein complex that plays a key role in early embryonic development. The SCMC complex is a structural constituent of cytoplasmic lattices, which consist in fibrous structures found in the cytoplasm of oocytes and preimplantation embryos. They are required to store maternal proteins critical for embryonic development, such as proteins that control epigenetic reprogramming of the preimplantation embryo, and prevent their degradation or activation. As part of the OOEP-KHDC3 scaffold, recruits BLM and TRIM25 to DNA replication forks, thereby promoting the ubiquitination of BLM by TRIM25, enhancing BLM retainment at replication forks and therefore promoting stalled replication fork restart. Positively regulates the homologous recombination-mediated DNA double-strand break (DSB) repair pathway by regulating ATM activation and RAD51 recruitment to DSBs in oocytes. Thereby contributes to oocyte survival and the resumption and completion of meiosis. The polypeptide is Oocyte-expressed protein homolog (Homo sapiens (Human)).